The following is a 96-amino-acid chain: Prokineticin Bv8 (96 aa).

Residues 1-19 form the signal peptide; sequence MKCFAQIVVLLLVIAFSHG. The interval 20–24 is may be important for binding to prokineticin receptor 2; that stretch reads AVITG. 5 disulfide bridges follow: C26–C38, C32–C50, C37–C78, C60–C86, and C80–C95.

Expressed by the skin glands.

The protein resides in the secreted. Functionally, potent agonist for both PKR1/PROKR1 and PKR2/PROKR2, and inducer of a potent and long-lasting hyperalgesia. Shows an EC(50) of 0.264 nM, when tested on neuroblastoma cells (SH-SY5Y) which endogenously express mainly PKR2/PROKR2. Also potentiates capsaicin-induced TRPV1 current, when tested on DRG neurons. Induces a biphasic hyperalgesia to tactile and thermal stimuli after systemic injection of this protein into rat. The initial phase of hyperalgesia is caused by a local action on nociceptors, because intraplantar injection of this protein causes a strong and localized hyperalgesia with a similar time course to that of the initial phase of hyperalgesia seen with systemic injection. The secondary phase of hyperalgesia is not seen with local intraplantar injection and is therefore probably attributable to a central action of this protein. At subnanomolar concentrations, this protein both induces potent chemotaxis of macrophages and stimulates LPS-induced production of the pro-inflammatory cytokines IL-1 and IL-12. In vivo, this protein potently stimulates the contraction of the guinea-pig gastrointestinal (GI) smooth muscle (at nanomolar concentration). This Bombina variegata (Yellow-bellied toad) protein is Prokineticin Bv8.